Consider the following 298-residue polypeptide: Glycine--tRNA ligase alpha subunit (298 aa).

It belongs to the class-II aminoacyl-tRNA synthetase family. In terms of assembly, tetramer of two alpha and two beta subunits.

It is found in the cytoplasm. It catalyses the reaction tRNA(Gly) + glycine + ATP = glycyl-tRNA(Gly) + AMP + diphosphate. The polypeptide is Glycine--tRNA ligase alpha subunit (Helicobacter pylori (strain P12)).